A 372-amino-acid chain; its full sequence is UDP-N-acetylglucosamine 2-epimerase (372 aa).

Substrate contacts are provided by residues Arg-10, Lys-15, Asp-95, Glu-117, His-212, Gln-270, Phe-275, 289–291 (SGG), Glu-295, and Arg-312.

Belongs to the UDP-N-acetylglucosamine 2-epimerase family.

It catalyses the reaction UDP-N-acetyl-alpha-D-glucosamine = UDP-N-acetyl-alpha-D-mannosamine. The protein operates within capsule biogenesis; capsule polysaccharide biosynthesis. Activated by UDP-GlcNAc and inhibited by 2-acetamidoglucal and UDP. Activity is strongly decreased in the presence of Co(2+) and abolished in the presence of Mn(2+) or Zn(2+). Its function is as follows. Catalyzes the interconversion between UDP-N-acetylglucosamine (UDP-GlcNAc) and UDP-N-acetylmannosamine (UDP-ManNAc). Involved in the biosynthesis of the capsular polysaccharides. In vitro, can also use several chemoenzymatically synthesized UDP-ManNAc derivatives as substrates, with lower efficiency. The sequence is that of UDP-N-acetylglucosamine 2-epimerase from Neisseria meningitidis serogroup A / serotype 4A (strain DSM 15465 / Z2491).